The primary structure comprises 359 residues: tRNA-specific 2-thiouridylase MnmA (359 aa).

Residues Ala-7–Ser-14 and Met-33 each bind ATP. Cys-101 acts as the Nucleophile in catalysis. A disulfide bridge links Cys-101 with Cys-198. Gly-125 is a binding site for ATP. Residues Lys-148–Gln-150 are interaction with tRNA. Cys-198 acts as the Cysteine persulfide intermediate in catalysis.

The protein belongs to the MnmA/TRMU family.

The protein resides in the cytoplasm. It catalyses the reaction S-sulfanyl-L-cysteinyl-[protein] + uridine(34) in tRNA + AH2 + ATP = 2-thiouridine(34) in tRNA + L-cysteinyl-[protein] + A + AMP + diphosphate + H(+). Its function is as follows. Catalyzes the 2-thiolation of uridine at the wobble position (U34) of tRNA, leading to the formation of s(2)U34. The polypeptide is tRNA-specific 2-thiouridylase MnmA (Chloroflexus aurantiacus (strain ATCC 29366 / DSM 635 / J-10-fl)).